A 73-amino-acid chain; its full sequence is Large ribosomal subunit protein bL28 (73 aa).

It belongs to the bacterial ribosomal protein bL28 family.

The chain is Large ribosomal subunit protein bL28 from Anaeromyxobacter sp. (strain Fw109-5).